A 154-amino-acid polypeptide reads, in one-letter code: UPF0039 protein sll0451 (154 aa).

Residues Gln8–Pro151 enclose the N-acetyltransferase domain.

Belongs to the UPF0039 (ElaA) family.

This Synechocystis sp. (strain ATCC 27184 / PCC 6803 / Kazusa) protein is UPF0039 protein sll0451.